A 54-amino-acid chain; its full sequence is Ovomucoid (54 aa).

In terms of domain architecture, Kazal-like spans Val4–Cys54. Intrachain disulfides connect Cys6-Cys36, Cys14-Cys33, and Cys22-Cys54. N-linked (GlcNAc...) asparagine glycosylation is present at Asn43.

The protein localises to the secreted. This is Ovomucoid from Guira guira (Guira cuckoo).